Reading from the N-terminus, the 91-residue chain is Probable Fe(2+)-trafficking protein (91 aa).

The protein belongs to the Fe(2+)-trafficking protein family.

Its function is as follows. Could be a mediator in iron transactions between iron acquisition and iron-requiring processes, such as synthesis and/or repair of Fe-S clusters in biosynthetic enzymes. The sequence is that of Probable Fe(2+)-trafficking protein from Ralstonia nicotianae (strain ATCC BAA-1114 / GMI1000) (Ralstonia solanacearum).